The sequence spans 397 residues: Chorismate synthase (397 aa).

NADP(+) contacts are provided by R40 and R46. Residues 129-131, 257-258, G302, 317-321, and R343 contribute to the FMN site; these read RSS, QA, and KPISS.

This sequence belongs to the chorismate synthase family. In terms of assembly, homotetramer. Requires FMNH2 as cofactor.

The enzyme catalyses 5-O-(1-carboxyvinyl)-3-phosphoshikimate = chorismate + phosphate. It functions in the pathway metabolic intermediate biosynthesis; chorismate biosynthesis; chorismate from D-erythrose 4-phosphate and phosphoenolpyruvate: step 7/7. In terms of biological role, catalyzes the anti-1,4-elimination of the C-3 phosphate and the C-6 proR hydrogen from 5-enolpyruvylshikimate-3-phosphate (EPSP) to yield chorismate, which is the branch point compound that serves as the starting substrate for the three terminal pathways of aromatic amino acid biosynthesis. This reaction introduces a second double bond into the aromatic ring system. The chain is Chorismate synthase from Chlorobaculum tepidum (strain ATCC 49652 / DSM 12025 / NBRC 103806 / TLS) (Chlorobium tepidum).